The sequence spans 556 residues: Polypeptide N-acetylgalactosaminyltransferase 13 (556 aa).

The Cytoplasmic portion of the chain corresponds to 1–4; the sequence is MRRF. Residues 5-27 traverse the membrane as a helical; Signal-anchor for type II membrane protein segment; that stretch reads VYCKVVLATSLMWVLVDVFLLLY. Residues 28–556 are Lumenal-facing; the sequence is FSECNKCDDK…WLLRNMTLGT (529 aa). N-linked (GlcNAc...) asparagine glycosylation is found at Asn94 and Asn116. 5 disulfides stabilise this stretch: Cys105–Cys338, Cys329–Cys407, Cys441–Cys458, Cys481–Cys496, and Cys522–Cys539. Positions 114-224 are catalytic subdomain A; sequence LPNTSVVIVF…LGWLEPLLAR (111 aa). 2 residues coordinate substrate: Asp155 and Arg185. Mn(2+)-binding residues include Asp208 and His210. The interval 284-346 is catalytic subdomain B; sequence PVRTPTMAGG…TCSHVGHVFR (63 aa). Trp315 is a substrate binding site. His343 is a binding site for Mn(2+). Residues Arg346 and Tyr351 each contribute to the substrate site. Residues 428–550 enclose the Ricin B-type lectin domain; the sequence is YSLGEIRNVE…GSRSQQWLLR (123 aa). The N-linked (GlcNAc...) asparagine glycan is linked to Asn551.

This sequence belongs to the glycosyltransferase 2 family. GalNAc-T subfamily. Mn(2+) is required as a cofactor. In terms of tissue distribution, specifically expressed in neuronal cells. Not expressed in glial cells such as astrocytes. Expressed at low level.

Its subcellular location is the golgi apparatus membrane. It catalyses the reaction L-seryl-[protein] + UDP-N-acetyl-alpha-D-galactosamine = a 3-O-[N-acetyl-alpha-D-galactosaminyl]-L-seryl-[protein] + UDP + H(+). It carries out the reaction L-threonyl-[protein] + UDP-N-acetyl-alpha-D-galactosamine = a 3-O-[N-acetyl-alpha-D-galactosaminyl]-L-threonyl-[protein] + UDP + H(+). Its pathway is protein modification; protein glycosylation. Its function is as follows. Catalyzes the initial reaction in O-linked oligosaccharide biosynthesis, the transfer of an N-acetyl-D-galactosamine (GalNAc) residue from UDP-GalNAc to a serine or threonine residue on the protein receptor. Generates GalNAc-O-Ser/Thr structure also known as Tn antigen, which itself is immunogenic but also serves as a precursor for the synthesis of different mucin-type O-glycan core structures. Contributes to the synthesis of O-linked glycans on mucins and proteoglycans of the central nervous system. Can glycosylate both unmodified peptides and glycopeptides that already contain an O-linked GalNAc sugar. Transfers GalNAc to Thr-/Ser-rich tandem repeats GTTPSPVPTTSTTSAP of MUC5AC. Transfers GalNAc to three consecutive serine/threonine residues on SDC3 forming a triplet-Tn epitope expressed in Purkinje cells of the developing brain. May promote neurogenesis through glycosylation and stabilization of PDPN. This chain is Polypeptide N-acetylgalactosaminyltransferase 13 (Galnt13), found in Mus musculus (Mouse).